The primary structure comprises 256 residues: Glutamate racemase (256 aa).

Substrate contacts are provided by residues 5–6 and 37–38; these read DS and YG. The active-site Proton donor/acceptor is the C69. 70–71 is a binding site for substrate; it reads NT. The active-site Proton donor/acceptor is C181. 182-183 serves as a coordination point for substrate; it reads TH.

This sequence belongs to the aspartate/glutamate racemases family.

It carries out the reaction L-glutamate = D-glutamate. It participates in cell wall biogenesis; peptidoglycan biosynthesis. Its function is as follows. Provides the (R)-glutamate required for cell wall biosynthesis. This Buchnera aphidicola subsp. Schizaphis graminum (strain Sg) protein is Glutamate racemase.